The primary structure comprises 203 residues: Large ribosomal subunit protein uL6 (203 aa).

This sequence belongs to the universal ribosomal protein uL6 family. As to quaternary structure, part of the 50S ribosomal subunit.

Functionally, this protein binds to the 23S rRNA, and is important in its secondary structure. It is located near the subunit interface in the base of the L7/L12 stalk, and near the tRNA binding site of the peptidyltransferase center. In Hyphomonas neptunium (strain ATCC 15444), this protein is Large ribosomal subunit protein uL6.